Reading from the N-terminus, the 551-residue chain is Cytochrome P450 monooxygenase sdnQ (551 aa).

A disordered region spans residues 1 to 23; sequence MDDPSIASGFQQGTGRTTGANGT. Over residues 8–23 the composition is skewed to polar residues; sequence SGFQQGTGRTTGANGT. N-linked (GlcNAc...) asparagine glycosylation occurs at N21. Residues 41-57 form a helical membrane-spanning segment; that stretch reads CIGTSLLVALLTTIIIY. Residue C491 coordinates heme.

It belongs to the cytochrome P450 family. Requires heme as cofactor.

Its subcellular location is the membrane. The protein operates within antibiotic biosynthesis. In terms of biological role, cytochrome P450 monooxygenase; part of the gene cluster that mediates the biosynthesis of sordarin and hypoxysordarin, glycoside antibiotics with a unique tetracyclic diterpene aglycone structure. First, the geranylgeranyl diphosphate synthase sdnC constructs GGDP from farnesyl diphosphate and isopentenyl diphosphate. The diterpene cyclase sdnA then catalyzes the cyclization of GGDP to afford cycloaraneosene. Cycloaraneosene is then hydroxylated four times by the putative cytochrome P450 monooxygenases sdnB, sdnE, sdnF and sdnH to give a hydroxylated cycloaraneosene derivative such as cycloaraneosene-8,9,13,19-tetraol. Although the order of the hydroxylations is unclear, at least C8, C9 and C13 of the cycloaraneosene skeleton are hydroxylated before the sordaricin formation. Dehydration of the 13-hydroxy group of the hydroxylated cycloaraneosene derivative might be catalyzed by an unassigned hypothetical protein such as sdnG and sdnP to construct the cyclopentadiene moiety. The FAD-dependent oxidoreductase sdnN is proposed to catalyze the oxidation at C9 of the hydroxylated cycloaraneosene derivative and also catalyze the Baeyer-Villiger oxidation to give the lactone intermediate. The presumed lactone intermediate would be hydrolyzed to give an acrolein moiety and a carboxylate moiety. Then, [4+2]cycloaddition would occur between the acrolein moiety and the cyclopentadiene moiety to give sordaricin. SdnN might also be involved in the [4+2]cycloaddition after the hypothesized oxidation to accommodate the oxidized product and prompt the [4+2]cycloaddition. GDP-6-deoxy-D-altrose may be biosynthesized from GDP-D-mannose by the putative GDP-mannose-4,6-dehydratase sdnI and the short-chain dehydrogenase sdnK. The glycosyltransferase sdnJ catalyzes the attachment of 6-deoxy-D-altrose onto the 19-hydroxy group of sordaricin to give 4'-O-demethylsordarin. The methyltransferase sdnD would complete the biosynthesis of sordarin. Sordarin can be further modified into hypoxysordarin. The unique acyl chain at the 3'-hydroxy group of hypoxysordarin would be constructed by an iterative type I PKS sdnO and the trans-acting polyketide methyltransferase sdnL. SdnL would be responsible for the introduction of an alpha-methyl group of the polyketide chain. Alternatively, the beta-lactamase-like protein sdnR might be responsible for the cleavage and transfer of the polyketide chain from the PKS sdnO to sordarin. Two putative cytochrome P450 monooxygenases, sdnQ and sdnT, might catalyze the epoxidations of the polyketide chain to complete the biosynthesis of hypoxysordarin. Transcriptional regulators sdnM and sdnS are presumably encoded for the transcriptional regulation of the expression of the sdn gene cluster. The chain is Cytochrome P450 monooxygenase sdnQ from Sordaria araneosa (Pleurage araneosa).